We begin with the raw amino-acid sequence, 293 residues long: Kynurenine formamidase (293 aa).

The HGGXW signature appears at 84–88; it reads HGGYW. Catalysis depends on Ser-153, which acts as the Nucleophile. Residues Asp-236 and His-268 contribute to the active site.

The protein belongs to the kynurenine formamidase family. In terms of assembly, homodimer.

Its subcellular location is the cytoplasm. It is found in the cytosol. The protein localises to the nucleus. It catalyses the reaction N-formyl-L-kynurenine + H2O = L-kynurenine + formate + H(+). The protein operates within amino-acid degradation; L-tryptophan degradation via kynurenine pathway; L-kynurenine from L-tryptophan: step 2/2. In terms of biological role, catalyzes the hydrolysis of N-formyl-L-kynurenine to L-kynurenine, the second step in the kynurenine pathway of tryptophan degradation. Kynurenine may be further oxidized to nicotinic acid, NAD(H) and NADP(H). Required for elimination of toxic metabolites. The sequence is that of Kynurenine formamidase (afmid) from Danio rerio (Zebrafish).